Consider the following 139-residue polypeptide: Translation initiation factor 2 subunit beta (139 aa).

This sequence belongs to the eIF-2-beta/eIF-5 family. In terms of assembly, heterotrimer composed of an alpha, a beta and a gamma chain.

Functionally, eIF-2 functions in the early steps of protein synthesis by forming a ternary complex with GTP and initiator tRNA. The protein is Translation initiation factor 2 subunit beta of Sulfurisphaera tokodaii (strain DSM 16993 / JCM 10545 / NBRC 100140 / 7) (Sulfolobus tokodaii).